We begin with the raw amino-acid sequence, 458 residues long: Bifunctional protein GlmU (458 aa).

A pyrophosphorylase region spans residues 1-229 (MNKFAIVLAA…FDESLGVNDR (229 aa)). UDP-N-acetyl-alpha-D-glucosamine-binding positions include 8–11 (LAAG), lysine 22, glutamine 72, and 77–78 (GT). Aspartate 102 contacts Mg(2+). UDP-N-acetyl-alpha-D-glucosamine is bound by residues glycine 139, glutamate 154, asparagine 169, and asparagine 227. Asparagine 227 is a Mg(2+) binding site. Residues 230-250 (VALSQAELTMRKRINHQHMVN) form a linker region. The tract at residues 251-458 (GVTLIDPATT…AKKMPHYRGQ (208 aa)) is N-acetyltransferase. Residues arginine 332 and lysine 350 each contribute to the UDP-N-acetyl-alpha-D-glucosamine site. Catalysis depends on histidine 362, which acts as the Proton acceptor. UDP-N-acetyl-alpha-D-glucosamine contacts are provided by tyrosine 365 and asparagine 376. Alanine 379, serine 404, alanine 422, and arginine 439 together coordinate acetyl-CoA.

This sequence in the N-terminal section; belongs to the N-acetylglucosamine-1-phosphate uridyltransferase family. In the C-terminal section; belongs to the transferase hexapeptide repeat family. Homotrimer. Requires Mg(2+) as cofactor.

The protein resides in the cytoplasm. The enzyme catalyses alpha-D-glucosamine 1-phosphate + acetyl-CoA = N-acetyl-alpha-D-glucosamine 1-phosphate + CoA + H(+). It carries out the reaction N-acetyl-alpha-D-glucosamine 1-phosphate + UTP + H(+) = UDP-N-acetyl-alpha-D-glucosamine + diphosphate. It participates in nucleotide-sugar biosynthesis; UDP-N-acetyl-alpha-D-glucosamine biosynthesis; N-acetyl-alpha-D-glucosamine 1-phosphate from alpha-D-glucosamine 6-phosphate (route II): step 2/2. It functions in the pathway nucleotide-sugar biosynthesis; UDP-N-acetyl-alpha-D-glucosamine biosynthesis; UDP-N-acetyl-alpha-D-glucosamine from N-acetyl-alpha-D-glucosamine 1-phosphate: step 1/1. The protein operates within bacterial outer membrane biogenesis; LPS lipid A biosynthesis. In terms of biological role, catalyzes the last two sequential reactions in the de novo biosynthetic pathway for UDP-N-acetylglucosamine (UDP-GlcNAc). The C-terminal domain catalyzes the transfer of acetyl group from acetyl coenzyme A to glucosamine-1-phosphate (GlcN-1-P) to produce N-acetylglucosamine-1-phosphate (GlcNAc-1-P), which is converted into UDP-GlcNAc by the transfer of uridine 5-monophosphate (from uridine 5-triphosphate), a reaction catalyzed by the N-terminal domain. This is Bifunctional protein GlmU from Lactococcus lactis subsp. lactis (strain IL1403) (Streptococcus lactis).